A 379-amino-acid chain; its full sequence is Protein COS4 (379 aa).

A run of 4 helical transmembrane segments spans residues 43 to 63, 70 to 90, 233 to 253, and 255 to 275; these read IYKS…SVWW, IYPL…VLVI, ISNI…YVSR, and MCLL…VQGF.

The protein belongs to the DUP/COS family.

It localises to the membrane. This chain is Protein COS4 (COS4), found in Saccharomyces cerevisiae (strain ATCC 204508 / S288c) (Baker's yeast).